Consider the following 406-residue polypeptide: Dual-specificity RNA methyltransferase RlmN (406 aa).

Residue E121 is the Proton acceptor of the active site. The Radical SAM core domain occupies 127–377; it reads ERDRGTLCVS…VRTPRGRDIL (251 aa). A disulfide bond links C134 and C380. Positions 141, 145, and 148 each coordinate [4Fe-4S] cluster. Residues 206–207, S238, 260–262, and N337 each bind S-adenosyl-L-methionine; these read GE and SLH. The S-methylcysteine intermediate role is filled by C380.

It belongs to the radical SAM superfamily. RlmN family. It depends on [4Fe-4S] cluster as a cofactor.

The protein localises to the cytoplasm. It carries out the reaction adenosine(2503) in 23S rRNA + 2 reduced [2Fe-2S]-[ferredoxin] + 2 S-adenosyl-L-methionine = 2-methyladenosine(2503) in 23S rRNA + 5'-deoxyadenosine + L-methionine + 2 oxidized [2Fe-2S]-[ferredoxin] + S-adenosyl-L-homocysteine. It catalyses the reaction adenosine(37) in tRNA + 2 reduced [2Fe-2S]-[ferredoxin] + 2 S-adenosyl-L-methionine = 2-methyladenosine(37) in tRNA + 5'-deoxyadenosine + L-methionine + 2 oxidized [2Fe-2S]-[ferredoxin] + S-adenosyl-L-homocysteine. Functionally, specifically methylates position 2 of adenine 2503 in 23S rRNA and position 2 of adenine 37 in tRNAs. m2A2503 modification seems to play a crucial role in the proofreading step occurring at the peptidyl transferase center and thus would serve to optimize ribosomal fidelity. The chain is Dual-specificity RNA methyltransferase RlmN from Azorhizobium caulinodans (strain ATCC 43989 / DSM 5975 / JCM 20966 / LMG 6465 / NBRC 14845 / NCIMB 13405 / ORS 571).